The primary structure comprises 186 residues: NADH-quinone oxidoreductase subunit B (186 aa).

[4Fe-4S] cluster-binding residues include cysteine 44, cysteine 45, cysteine 110, and cysteine 139.

It belongs to the complex I 20 kDa subunit family. In terms of assembly, NDH-1 is composed of 14 different subunits. Subunits NuoB, C, D, E, F, and G constitute the peripheral sector of the complex. Requires [4Fe-4S] cluster as cofactor.

It localises to the cell inner membrane. The enzyme catalyses a quinone + NADH + 5 H(+)(in) = a quinol + NAD(+) + 4 H(+)(out). In terms of biological role, NDH-1 shuttles electrons from NADH, via FMN and iron-sulfur (Fe-S) centers, to quinones in the respiratory chain. The immediate electron acceptor for the enzyme in this species is believed to be ubiquinone. Couples the redox reaction to proton translocation (for every two electrons transferred, four hydrogen ions are translocated across the cytoplasmic membrane), and thus conserves the redox energy in a proton gradient. The polypeptide is NADH-quinone oxidoreductase subunit B (Leptospira borgpetersenii serovar Hardjo-bovis (strain JB197)).